The chain runs to 402 residues: Putative PDZ domain-containing protein PDZK1P1 (402 aa).

PDZ domains are found at residues R12–E93 and I121–E206. The tract at residues G230–K258 is disordered. A compositionally biased stretch (polar residues) spans P240 to D250. The 81-residue stretch at L261–K341 folds into the PDZ 3 domain. Residues D362–M402 form a disordered region. Residues P365 to H387 show a composition bias toward basic and acidic residues. Residues S388–M402 show a composition bias toward low complexity.

It belongs to the NHER family.

The chain is Putative PDZ domain-containing protein PDZK1P1 from Homo sapiens (Human).